The primary structure comprises 318 residues: L-lactate dehydrogenase (318 aa).

Residues Val18, Asp39, Lys44, Tyr69, and Gly83 to Ala84 contribute to the NAD(+) site. Gln86 and Arg92 together coordinate substrate. NAD(+)-binding positions include Ser105, Val122 to Asn124, and Ser147. A substrate-binding site is contributed by Asn124 to Asp127. Residue Asp152–Arg155 participates in substrate binding. The active-site Proton acceptor is the His179. Phosphotyrosine is present on Tyr225. Thr234 serves as a coordination point for substrate.

It belongs to the LDH/MDH superfamily. LDH family. Homotetramer.

The protein localises to the cytoplasm. The catalysed reaction is (S)-lactate + NAD(+) = pyruvate + NADH + H(+). It participates in fermentation; pyruvate fermentation to lactate; (S)-lactate from pyruvate: step 1/1. Its function is as follows. Catalyzes the conversion of lactate to pyruvate. The polypeptide is L-lactate dehydrogenase (Clostridium botulinum (strain Loch Maree / Type A3)).